Consider the following 229-residue polypeptide: Golgi to ER traffic protein 1 (229 aa).

Residues 1 to 14 (MGILAALDLHPYTL) lie on the Lumenal side of the membrane. The chain crosses the membrane as a helical span at residues 15–34 (VVSSFTVLLIQQLVGFIGKS). The Cytoplasmic segment spans residues 35-122 (TIQEFAWLFY…KINSLVGVVL (88 aa)). Residues 60–117 (HTKKQEELHKLNREKRSISAQDEYAKWTKLNRQAEKLTAEVKSLSDDIAKDKSKINSL) adopt a coiled-coil conformation. The chain crosses the membrane as a helical span at residues 123-143 (LFLTTLPLWVFRLWFRKSVLF). The Lumenal segment spans residues 144-167 (YLPTGVFPYYVERVLAIPFFASGS). The helical transmembrane segment at 168–184 (VGLTVWMFAVNNVISSV) threads the bilayer. Topologically, residues 185-229 (LFLLTFPFKPSVPIPIRQTKVEEVVPESAESKESSPEVIDIADAN) are cytoplasmic. Positions 210–219 (PESAESKESS) are enriched in basic and acidic residues. The segment at 210 to 229 (PESAESKESSPEVIDIADAN) is disordered.

Belongs to the WRB/GET1 family. Component of the Golgi to ER traffic (GET) complex, which is composed of GET1, GET2 and GET3. Within the complex, GET1 and GET2 form a heterotetramer which is stabilized by phosphatidylinositol binding and which binds to the GET3 homodimer.

It localises to the endoplasmic reticulum membrane. The protein resides in the golgi apparatus membrane. Its function is as follows. Required for the post-translational delivery of tail-anchored (TA) proteins to the endoplasmic reticulum. Together with GET2, acts as a membrane receptor for soluble GET3, which recognizes and selectively binds the transmembrane domain of TA proteins in the cytosol. The GET complex cooperates with the HDEL receptor ERD2 to mediate the ATP-dependent retrieval of resident ER proteins that contain a C-terminal H-D-E-L retention signal from the Golgi to the ER. The polypeptide is Golgi to ER traffic protein 1 (Scheffersomyces stipitis (strain ATCC 58785 / CBS 6054 / NBRC 10063 / NRRL Y-11545) (Yeast)).